Here is a 402-residue protein sequence, read N- to C-terminus: NADH-quinone oxidoreductase subunit D (402 aa).

The protein belongs to the complex I 49 kDa subunit family. In terms of assembly, NDH-1 is composed of 14 different subunits. Subunits NuoB, C, D, E, F, and G constitute the peripheral sector of the complex.

It localises to the cell inner membrane. It catalyses the reaction a quinone + NADH + 5 H(+)(in) = a quinol + NAD(+) + 4 H(+)(out). In terms of biological role, NDH-1 shuttles electrons from NADH, via FMN and iron-sulfur (Fe-S) centers, to quinones in the respiratory chain. The immediate electron acceptor for the enzyme in this species is believed to be ubiquinone. Couples the redox reaction to proton translocation (for every two electrons transferred, four hydrogen ions are translocated across the cytoplasmic membrane), and thus conserves the redox energy in a proton gradient. The chain is NADH-quinone oxidoreductase subunit D from Maricaulis maris (strain MCS10) (Caulobacter maris).